Here is a 78-residue protein sequence, read N- to C-terminus: Small, acid-soluble spore protein Tlp (78 aa).

The interval 32–78 (SEEQLSFASEAEQEQIREKNERRNESIEAMRNEIHDEAEARKNGYHQ) is disordered. Residues 45–78 (EQIREKNERRNESIEAMRNEIHDEAEARKNGYHQ) are compositionally biased toward basic and acidic residues.

Belongs to the Tlp family.

The protein resides in the spore core. This Bacillus licheniformis (strain ATCC 14580 / DSM 13 / JCM 2505 / CCUG 7422 / NBRC 12200 / NCIMB 9375 / NCTC 10341 / NRRL NRS-1264 / Gibson 46) protein is Small, acid-soluble spore protein Tlp.